We begin with the raw amino-acid sequence, 91 residues long: Small ubiquitin-related modifier (91 aa).

Residues 13–91 (EYIKIKVVGQ…EVYQEQLGGF (79 aa)) enclose the Ubiquitin-like domain. Residue G90 forms a Glycyl lysine isopeptide (Gly-Lys) (interchain with K-? in acceptor proteins) linkage. A propeptide is located at residue F91.

This sequence belongs to the ubiquitin family. SUMO subfamily. In terms of assembly, covalently attached to tbx-2. Covalently attached to lin-1. Covalently attached to lin-11. Covalently attached to sop-2. Covalently attached to bet-1. Cleavage of precursor form by ulp-1 is necessary for function.

Its subcellular location is the cytoplasm. It localises to the nucleus. The protein localises to the cytoskeleton. The protein resides in the spindle. It is found in the chromosome. Its subcellular location is the microtubule organizing center. It localises to the centrosome. Functionally, ubiquitin-like protein which can be covalently attached to target lysines as a monomer. Does not seem to be involved in protein degradation and may function as an antagonist of ubiquitin in the degradation process. Plays a role in a number of cellular processes such as nuclear transport, DNA replication and repair, mitosis and signal transduction. Covalent attachment to its substrates requires prior activation by the E1 complex aos-1-uba-2 and linkage to the E2 enzyme ubc-9, and can be promoted by an E3 ligase such as gei-17. Required for embryonic development, fertility, vulval morphogenesis and inhibition of vulval cell fates. Probably by sumoylating bet-1, prevents muscle myosin depletion in aging adults probably by preventing myoblast growth factor receptor egl-15 overexpression. Plays a role in the attenuation of the let-60/ras pathway. Plays a role in male tail tip morphogenesis. Plays a role in the mitochondrial stress response with its covalent attachment to transcription factors dve-1 and afts-1 negatively regulating the mitochondrial unfolded protein response. This is Small ubiquitin-related modifier from Caenorhabditis elegans.